A 343-amino-acid polypeptide reads, in one-letter code: Cytoplasmic tRNA 2-thiolation protein 1 (343 aa).

It belongs to the TtcA family. CTU1/NCS6/ATPBD3 subfamily.

The protein resides in the cytoplasm. It participates in tRNA modification; 5-methoxycarbonylmethyl-2-thiouridine-tRNA biosynthesis. In terms of biological role, plays a central role in 2-thiolation of mcm(5)S(2)U at tRNA wobble positions of tRNA(Lys), tRNA(Glu) and tRNA(Gln). Directly binds tRNAs and probably acts by catalyzing adenylation of tRNAs, an intermediate required for 2-thiolation. It is unclear whether it acts as a sulfurtransferase that transfers sulfur from thiocarboxylated URM1 onto the uridine of tRNAs at wobble position. This chain is Cytoplasmic tRNA 2-thiolation protein 1, found in Drosophila ananassae (Fruit fly).